The sequence spans 291 residues: N-acetylmannosamine kinase (291 aa).

Residues 5-12 (AIDIGGTK) and 132-139 (GVGGGVVS) contribute to the ATP site. Zn(2+) contacts are provided by histidine 156, cysteine 166, cysteine 168, and cysteine 173.

It belongs to the ROK (NagC/XylR) family. NanK subfamily. In terms of assembly, homodimer.

It catalyses the reaction an N-acyl-D-mannosamine + ATP = an N-acyl-D-mannosamine 6-phosphate + ADP + H(+). Its pathway is amino-sugar metabolism; N-acetylneuraminate degradation; D-fructose 6-phosphate from N-acetylneuraminate: step 2/5. Functionally, catalyzes the phosphorylation of N-acetylmannosamine (ManNAc) to ManNAc-6-P. In Shigella flexneri serotype 5b (strain 8401), this protein is N-acetylmannosamine kinase.